A 553-amino-acid polypeptide reads, in one-letter code: Arginine--tRNA ligase (553 aa).

The 'HIGH' region signature appears at 130 to 140; that stretch reads ANPTGPIHLGG.

The protein belongs to the class-I aminoacyl-tRNA synthetase family. Monomer.

The protein localises to the cytoplasm. The catalysed reaction is tRNA(Arg) + L-arginine + ATP = L-arginyl-tRNA(Arg) + AMP + diphosphate. This Corynebacterium aurimucosum (strain ATCC 700975 / DSM 44827 / CIP 107346 / CN-1) (Corynebacterium nigricans) protein is Arginine--tRNA ligase.